Reading from the N-terminus, the 717-residue chain is Putative amino acid transporter AAT1 (717 aa).

Positions 1–10 (MREGAFDASR) are enriched in basic and acidic residues. Residues 1 to 88 (MREGAFDASR…DRAQTDSRQE (88 aa)) are disordered. Polar residues predominate over residues 16–25 (QRPSSLSTAQ). The segment covering 26 to 53 (PPSDSRPPSSSSPPSSSSSSSSASSSSP) has biased composition (low complexity). The segment covering 74 to 88 (SAEKMDRAQTDSRQE) has biased composition (basic and acidic residues). A run of 8 helical transmembrane segments spans residues 124-143 (VLTLASSCLGAGVLATPYAM), 149-170 (LIGLSLLCMHTFVSFFTTYILM), 196-216 (AVDAIIVLNGLGVCLSFLVFL), 236-253 (HRAALLCASMVVIFPLSV), 265-283 (FFPVCALLFSLSCVVYRSL), 303-320 (FKSFNVFLFAFMQHINVC), 341-358 (AALLEYCLYTPIATLGYL), and 378-402 (LMHVCTLLLSFSMVLGVPLTLIPTV). The tract at residues 462–602 (GDAEYGGAEA…REEREEREGQ (141 aa)) is disordered. The span at 463 to 477 (DAEYGGAEAGEATRG) shows a compositional bias: low complexity. Residues 497-519 (ARNRDRSRLHADSERSAGDREGS) are compositionally biased toward basic and acidic residues. Over residues 547 to 558 (GSSSASSRSVDS) the composition is skewed to low complexity. A compositionally biased stretch (basic and acidic residues) spans 584–602 (SGDREAREEREEREEREGQ). The next 3 helical transmembrane spans lie at 622-638 (VCVAACLLPVLLLALVL), 644-669 (VVGLLGGFFSTLLMSALPSIIFYAGI), and 681-702 (LLMVFLLGVTCVGAFSSVIIIL).

It belongs to the amino acid/polyamine transporter 2 family.

It is found in the vacuole membrane. Its function is as follows. Putative amino acid transporter. Probably transports arginine. Involved in maintaining the osmotic homeostasis of the digestive vacuole. Required for extracellular parasite survival and bradyzoite differentiation. This chain is Putative amino acid transporter AAT1, found in Toxoplasma gondii (strain ATCC 50611 / Me49).